Consider the following 312-residue polypeptide: Ornithine carbamoyltransferase (312 aa).

Residues Ser57–Thr60, Gln84, Arg108, and His135–Gln138 contribute to the carbamoyl phosphate site. L-ornithine-binding positions include Asn166, Asp226, and Ser230–Met231. Carbamoyl phosphate contacts are provided by residues Cys265 to Leu266 and Arg293.

Belongs to the aspartate/ornithine carbamoyltransferase superfamily. OTCase family.

The protein localises to the cytoplasm. It carries out the reaction carbamoyl phosphate + L-ornithine = L-citrulline + phosphate + H(+). It functions in the pathway amino-acid degradation; L-arginine degradation via ADI pathway; carbamoyl phosphate from L-arginine: step 2/2. In terms of biological role, reversibly catalyzes the transfer of the carbamoyl group from carbamoyl phosphate (CP) to the N(epsilon) atom of ornithine (ORN) to produce L-citrulline. The polypeptide is Ornithine carbamoyltransferase (Brucella abortus (strain 2308)).